Consider the following 389-residue polypeptide: Putative F-box protein At1g47790 (389 aa).

Positions 19–65 constitute an F-box domain; sequence SKPTSSFPLDLASEILLRLPVKSVVRFRCVSKLWSSIITDPYFIKTY.

The chain is Putative F-box protein At1g47790 from Arabidopsis thaliana (Mouse-ear cress).